Consider the following 227-residue polypeptide: uncharacterized protein (227 aa).

This is an uncharacterized protein from Haemophilus influenzae (Bacteriophage HP1).